A 142-amino-acid chain; its full sequence is Pre-mRNA-splicing factor cwf18 (142 aa).

The segment covering 24 to 45 (LENKTRDSQEVQKNVIEHRNYD) has biased composition (basic and acidic residues). The segment at 24–54 (LENKTRDSQEVQKNVIEHRNYDPEVQAPKMG) is disordered.

As to quaternary structure, belongs to the 40S cdc5-associated complex (or cwf complex), a spliceosome sub-complex reminiscent of a late-stage spliceosome composed of the U2, U5 and U6 snRNAs and at least brr2, cdc5, cwf2/prp3, cwf3/syf1, cwf4/syf3, cwf5/ecm2, spp42/cwf6, cwf7/spf27, cwf8, cwf9, cwf10, cwf11, cwf12, prp45/cwf13, cwf14, cwf15, cwf16, cwf17, cwf18, cwf19, cwf20, cwf21, cwf22, cwf23, cwf24, cwf25, cwf26, cyp7/cwf27, cwf28, cwf29/ist3, lea1, msl1, prp5/cwf1, prp10, prp12/sap130, prp17, prp22, sap61, sap62, sap114, sap145, slu7, smb1, smd1, smd3, smf1, smg1 and syf2.

It is found in the nucleus. In terms of biological role, involved in mRNA splicing where it associates with cdc5 and the other cwf proteins as part of the spliceosome. This chain is Pre-mRNA-splicing factor cwf18 (cwf18), found in Schizosaccharomyces pombe (strain 972 / ATCC 24843) (Fission yeast).